The primary structure comprises 209 residues: MLPRHSCSLLLFLFLLPSVPMEPHPPSSTLPPFLAPEWDLLSPRVALSRGAPAGPPLLFLLEAGAYGEPAGAPANRSRRGVSETAPASRRGELAVCDAVSGWVTDRRTAVDLRGREVEVLGEVPAAGGSPLRQYFFETRCKAESAGEGGPGVGGGGCRGVDRRHWLSECKAKQSYVRALTADSQGRVGWRWIRIDTACVCTLLSRTGRA.

A signal peptide spans 1-21 (MLPRHSCSLLLFLFLLPSVPM). A propeptide spanning residues 22-79 (EPHPPSSTLPPFLAPEWDLLSPRVALSRGAPAGPPLLFLLEAGAYGEPAGAPANRSRR) is cleaved from the precursor. Asparagine 75 is a glycosylation site (N-linked (GlcNAc...) asparagine). 3 cysteine pairs are disulfide-bonded: cysteine 96–cysteine 169, cysteine 140–cysteine 198, and cysteine 157–cysteine 200.

Belongs to the NGF-beta family.

It localises to the secreted. Target-derived survival factor for peripheral sensory sympathetic neurons. May promote ameloblast differentiation and subsequent reduction in proliferation of ameloblasts. The polypeptide is Neurotrophin-4 (Ntf4) (Mus musculus (Mouse)).